Consider the following 334-residue polypeptide: Glycerol-3-phosphate dehydrogenase [NAD(P)+] (334 aa).

3 residues coordinate NADPH: Trp13, Arg33, and Lys106. Sn-glycerol 3-phosphate contacts are provided by Lys106, Gly137, and Ser139. Residue Ala141 coordinates NADPH. Sn-glycerol 3-phosphate-binding residues include Lys192, Asp245, Ser255, Arg256, and Asn257. The active-site Proton acceptor is Lys192. Arg256 lines the NADPH pocket. NADPH contacts are provided by Val280 and Glu282.

This sequence belongs to the NAD-dependent glycerol-3-phosphate dehydrogenase family.

Its subcellular location is the cytoplasm. It catalyses the reaction sn-glycerol 3-phosphate + NAD(+) = dihydroxyacetone phosphate + NADH + H(+). It carries out the reaction sn-glycerol 3-phosphate + NADP(+) = dihydroxyacetone phosphate + NADPH + H(+). It participates in membrane lipid metabolism; glycerophospholipid metabolism. Its function is as follows. Catalyzes the reduction of the glycolytic intermediate dihydroxyacetone phosphate (DHAP) to sn-glycerol 3-phosphate (G3P), the key precursor for phospholipid synthesis. This is Glycerol-3-phosphate dehydrogenase [NAD(P)+] from Chlamydia caviae (strain ATCC VR-813 / DSM 19441 / 03DC25 / GPIC) (Chlamydophila caviae).